The sequence spans 454 residues: MSLRPISLMLALLLTSAPALAQSAPTPPATVQTEPRETIEGTLSQERTVIGIPSFATASVQTVAGLRTDALGRQLADVIAADLERSGLFEPIGPNGVRAIGRAEVQAPRFGEWQARGAENVVHGFVDAGSNGSLIVGCYLYDTALGSELVRKGFEIQPADWRRAAHKCADAIYSRLSGEAPFFDSRVAYIAESGPKGNRIKRLAIMDSDGGNHRFITNGQALALSPRFSPDYKKIVYVSYLNDRVRVFIYDVASGTQRLVTESRNPTFAPRWSPDGTQILYSMAVGGNTDIYRISANGGTPVRLTTAPGIDVGGSFSPDGRKIVFESDRSGSQQLYVMNIDGSNQQRISFGGGRYATPEWSPRGDLIAFTRMGGGEFRIGVMTPSGGGVRMLTNGWQDEAPTWSPNGRVIQFFRTTPGREGRSSLWQVDLTGVNLRRLPTPQDGSDPSWGPVLP.

The N-terminal stretch at 1–21 is a signal peptide; that stretch reads MSLRPISLMLALLLTSAPALA.

It belongs to the TolB family. In terms of assembly, the Tol-Pal system is composed of five core proteins: the inner membrane proteins TolA, TolQ and TolR, the periplasmic protein TolB and the outer membrane protein Pal. They form a network linking the inner and outer membranes and the peptidoglycan layer.

The protein resides in the periplasm. Part of the Tol-Pal system, which plays a role in outer membrane invagination during cell division and is important for maintaining outer membrane integrity. This Sphingopyxis alaskensis (strain DSM 13593 / LMG 18877 / RB2256) (Sphingomonas alaskensis) protein is Tol-Pal system protein TolB.